The chain runs to 274 residues: tRNA-cytidine(32) 2-sulfurtransferase (274 aa).

The short motif at Ser-40–Ser-45 is the PP-loop motif element. Residues Cys-115, Cys-118, and Cys-206 each coordinate [4Fe-4S] cluster.

Belongs to the TtcA family. As to quaternary structure, homodimer. The cofactor is Mg(2+). [4Fe-4S] cluster is required as a cofactor.

The protein resides in the cytoplasm. It catalyses the reaction cytidine(32) in tRNA + S-sulfanyl-L-cysteinyl-[cysteine desulfurase] + AH2 + ATP = 2-thiocytidine(32) in tRNA + L-cysteinyl-[cysteine desulfurase] + A + AMP + diphosphate + H(+). Its pathway is tRNA modification. Functionally, catalyzes the ATP-dependent 2-thiolation of cytidine in position 32 of tRNA, to form 2-thiocytidine (s(2)C32). The sulfur atoms are provided by the cysteine/cysteine desulfurase (IscS) system. In Ectopseudomonas mendocina (strain ymp) (Pseudomonas mendocina), this protein is tRNA-cytidine(32) 2-sulfurtransferase.